The chain runs to 501 residues: Proline--tRNA ligase (501 aa).

This sequence belongs to the class-II aminoacyl-tRNA synthetase family. ProS type 3 subfamily. Homodimer.

It localises to the cytoplasm. It carries out the reaction tRNA(Pro) + L-proline + ATP = L-prolyl-tRNA(Pro) + AMP + diphosphate. Catalyzes the attachment of proline to tRNA(Pro) in a two-step reaction: proline is first activated by ATP to form Pro-AMP and then transferred to the acceptor end of tRNA(Pro). This chain is Proline--tRNA ligase, found in Halobacterium salinarum (strain ATCC 29341 / DSM 671 / R1).